The sequence spans 652 residues: Neuroendocrine convertase 2 (652 aa).

The N-terminal stretch at 1–22 (MKNTHVDLICVFLSIFIGIGEA) is a signal peptide. The propeptide occupies 23–107 (VDVYTNHFHV…QLKGYTRTKR (85 aa)). The Peptidase S8 domain maps to 136-481 (QWYLKNTGQA…FGVLDAAEMV (346 aa)). Asparagine 167 is a glycosylation site (N-linked (GlcNAc...) asparagine). Active-site charge relay system residues include aspartate 174 and histidine 215. 2 disulfides stabilise this stretch: cysteine 232–cysteine 382 and cysteine 324–cysteine 354. Asparagine 290 is a glycosylation site (N-linked (GlcNAc...) asparagine). Serine 390 serves as the catalytic Charge relay system. Asparagine 451 is a glycosylation site (N-linked (GlcNAc...) asparagine). The region spanning 489 to 625 (TSPPRYHCTA…ELMLHGTREA (137 aa)) is the P/Homo B domain. A disulfide bridge connects residues cysteine 496 and cysteine 522. The interval 501–652 (IDTPHEIPAD…TVQKAHKRSH (152 aa)) is required for ubiquitination-mediated degradation. Asparagine 542 carries N-linked (GlcNAc...) asparagine glycosylation.

Belongs to the peptidase S8 family. Furin subfamily. As to quaternary structure, interacts (via C-terminus) with F-box protein fsn-1 (via SPRY domain); the interaction results in egl-3 proteasomal degradation. Ubiquitinated. As to expression, expressed in head and tail ganglia. Expressed in neurons including mechanosensory and motor neurons, and interneurons (at protein level). Expressed in the nerve ring, ventral nerve cord and intestine.

Its subcellular location is the cell projection. It is found in the axon. The protein localises to the cytoplasmic vesicle. The protein resides in the secretory vesicle lumen. It localises to the secreted. It carries out the reaction Release of protein hormones and neuropeptides from their precursors, generally by hydrolysis of -Lys-Arg-|- bonds.. Its function is as follows. Serine endoprotease which cleaves preproteins at paired basic amino acids. Processes FMRFamide-like (flp) and neuropeptide-like protein (nlp) neuropeptides. Probably by processing flp-1 and flp-18, modulates the neuronal excitation-inhibition balance and thus the level of activity of the locomotor circuit. Regulates sensitivity to mechanosensory stimuli. By processing neuropeptides, modulates basal acetylcholine release at the ventral cord neuromuscular junctions. Probably by processing flp neuropeptides, regulates the turning step of male mating behavior. Cleaves pro-insulin-like proteins ins-3, ins-4 and ins-6 into their mature active forms. Together with convertase kpc-1, cleaves pro-insulin-like protein ins-18. By controlling ins-4 and ins-6 processing and thus the activation of the daf-2/InsR pathway, negatively modulates synapse development and synaptic transmission at neuromuscular junctions. Similarly, by controlling ins-4 and ins-6 processing, negatively regulates dauer formation under optimal environmental conditions. Under adverse environmental conditions, may promote dauer formation by processing ins-18, a daf-2/InsR antagonist. May cleave dense-core vesicle membrane protein ida-1. Involved in egg-laying, fat storage and locomotion. This chain is Neuroendocrine convertase 2, found in Caenorhabditis elegans.